Consider the following 367-residue polypeptide: Phosphoribosylaminoimidazole-succinocarboxamide synthase (367 aa).

Belongs to the SAICAR synthetase family.

It carries out the reaction 5-amino-1-(5-phospho-D-ribosyl)imidazole-4-carboxylate + L-aspartate + ATP = (2S)-2-[5-amino-1-(5-phospho-beta-D-ribosyl)imidazole-4-carboxamido]succinate + ADP + phosphate + 2 H(+). It participates in purine metabolism; IMP biosynthesis via de novo pathway; 5-amino-1-(5-phospho-D-ribosyl)imidazole-4-carboxamide from 5-amino-1-(5-phospho-D-ribosyl)imidazole-4-carboxylate: step 1/2. In Shewanella amazonensis (strain ATCC BAA-1098 / SB2B), this protein is Phosphoribosylaminoimidazole-succinocarboxamide synthase.